A 137-amino-acid chain; its full sequence is Small ribosomal subunit protein uS11 (137 aa).

2 disordered regions span residues 1-31 (MPPKSRGTGPKKTQKARRRDKKNVPHGAAHI) and 117-137 (TISDVTPQPHNGCRPPKRRRV). A compositionally biased stretch (basic residues) spans 12–21 (KTQKARRRDK).

It belongs to the universal ribosomal protein uS11 family. In terms of assembly, part of the 30S ribosomal subunit. Interacts with proteins S7 and S18. Binds to IF-3.

Its function is as follows. Located on the platform of the 30S subunit, it bridges several disparate RNA helices of the 16S rRNA. Forms part of the Shine-Dalgarno cleft in the 70S ribosome. The polypeptide is Small ribosomal subunit protein uS11 (Rhodococcus jostii (strain RHA1)).